A 457-amino-acid polypeptide reads, in one-letter code: Fibrinogen C domain-containing protein 1 (457 aa).

The segment at 1-20 (MGSDRWKNIGGAPQMEDSVQ) is disordered. The Cytoplasmic portion of the chain corresponds to 1 to 33 (MGSDRWKNIGGAPQMEDSVQDKSQRKGCGYILC). A helical; Signal-anchor for type II membrane protein transmembrane segment spans residues 34-54 (TVLLSVAVLLAVTVTGAVLFM). The Extracellular segment spans residues 55-457 (NHYHAPSTEP…MKIRPQREEN (403 aa)). The tract at residues 211–235 (RPRVKADLQRAPSRSSRPRGCANGS) is disordered. A Fibrinogen C-terminal domain is found at 231–454 (CANGSKPRDC…FTEMKIRPQR (224 aa)). N-linked (GlcNAc...) asparagine glycosylation occurs at N233. C240 and C269 form a disulfide bridge. N-linked (GlcNAc...) asparagine glycosylation occurs at N336. Ca(2+) contacts are provided by D389 and D391. C397 and C410 are disulfide-bonded.

Homotetramer; disulfide-linked.

It localises to the membrane. Functionally, acetyl group-binding receptor which shows a calcium-dependent binding to acetylated structures such as chitin, some N-acetylated carbohydrates, and amino acids. This chain is Fibrinogen C domain-containing protein 1 (fibcd1), found in Xenopus tropicalis (Western clawed frog).